The chain runs to 314 residues: Protein phosphatase PTC7 homolog fig (314 aa).

In terms of domain architecture, PPM-type phosphatase spans 43 to 309 (PYLVTVVQGR…DDITLILSSV (267 aa)). The Mn(2+) site is built by D87, G88, and D232.

This sequence belongs to the PP2C family. It depends on Mg(2+) as a cofactor. Requires Mn(2+) as cofactor.

The enzyme catalyses O-phospho-L-seryl-[protein] + H2O = L-seryl-[protein] + phosphate. It carries out the reaction O-phospho-L-threonyl-[protein] + H2O = L-threonyl-[protein] + phosphate. This Drosophila simulans (Fruit fly) protein is Protein phosphatase PTC7 homolog fig.